The following is an 865-amino-acid chain: Xylosyltransferase 2 (865 aa).

Over 1–15 (MVASARVQKLVRRYK) the chain is Cytoplasmic. Residues 16–36 (LAIATALAILLLQGLVVWSFS) traverse the membrane as a helical; Signal-anchor for type II membrane protein segment. Over 37-865 (GLEEDEAGEK…GPVKADGRLR (829 aa)) the chain is Lumenal. Residues 41–157 (DEAGEKGRQR…EGAPQPTDNG (117 aa)) are disordered. The span at 53–65 (RPLDPGEGSKDTD) shows a compositional bias: basic and acidic residues. Residues 73–82 (STGRRHGRWR) show a composition bias toward basic residues. The N-linked (GlcNAc...) asparagine glycan is linked to asparagine 122. Low complexity predominate over residues 125–137 (GAAAGEALVGAAG). Disulfide bonds link cysteine 162–cysteine 190, cysteine 206–cysteine 448, cysteine 467–cysteine 480, and cysteine 469–cysteine 478. Residues valine 239, aspartate 267, and 296 to 298 (TIW) each bind UDP-alpha-D-xylose. Asparagine 327 carries an N-linked (GlcNAc...) asparagine glycan. A UDP-alpha-D-xylose-binding site is contributed by 400-401 (DW). UDP-alpha-D-xylose contacts are provided by residues serine 481 and 504-505 (RK). Intrachain disulfides connect cysteine 581–cysteine 833 and cysteine 826–cysteine 839. N-linked (GlcNAc...) asparagine glycosylation occurs at asparagine 683. Residues 846–865 (SLSPDPKSELGPVKADGRLR) are disordered.

The protein belongs to the glycosyltransferase 14 family. XylT subfamily. As to quaternary structure, monomer. Mg(2+) is required as a cofactor. It depends on Mn(2+) as a cofactor. In terms of processing, contains disulfide bonds. As to expression, widely expressed. Expressed at higher level in kidney and pancreas.

Its subcellular location is the golgi apparatus membrane. The protein resides in the secreted. The catalysed reaction is UDP-alpha-D-xylose + L-seryl-[protein] = 3-O-(beta-D-xylosyl)-L-seryl-[protein] + UDP + H(+). It participates in glycan metabolism; chondroitin sulfate biosynthesis. The protein operates within glycan metabolism; heparan sulfate biosynthesis. In terms of biological role, catalyzes the first step in the biosynthesis of chondroitin sulfate, heparan sulfate and dermatan sulfate proteoglycans, such as DCN. Transfers D-xylose from UDP-D-xylose to specific serine residues of the core protein. This Homo sapiens (Human) protein is Xylosyltransferase 2 (XYLT2).